We begin with the raw amino-acid sequence, 570 residues long: Periplasmic trehalase (570 aa).

Residues 1 to 34 form the signal peptide; it reads MIPPEIRRSVLLQKAIKLALAGTLLTFASFSATA. Substrate contacts are provided by residues arginine 159, 166–167, asparagine 203, 212–214, 284–286, and glycine 317; these read WD, RSQ, and RPE. Active-site proton donor/acceptor residues include aspartate 319 and glutamate 503. A substrate-binding site is contributed by glutamate 518. The tract at residues 544 to 570 is disordered; it reads KPCDSVPSTRPASLSATPTKTPSAATQ. Residues 554–570 are compositionally biased toward low complexity; that stretch reads PASLSATPTKTPSAATQ.

The protein belongs to the glycosyl hydrolase 37 family. Monomer.

Its subcellular location is the periplasm. The enzyme catalyses alpha,alpha-trehalose + H2O = alpha-D-glucose + beta-D-glucose. Provides the cells with the ability to utilize trehalose at high osmolarity by splitting it into glucose molecules that can subsequently be taken up by the phosphotransferase-mediated uptake system. The chain is Periplasmic trehalase from Salmonella choleraesuis (strain SC-B67).